A 474-amino-acid chain; its full sequence is ABHD16B (474 aa).

The region spanning 175–293 is the AB hydrolase-1 domain; sequence VICCEGNAGF…MPQSWKGLVV (119 aa). Active-site charge relay system residues include Ser248, Asp323, and His423.

This sequence belongs to the AB hydrolase superfamily. ABHD16 family.

It carries out the reaction a 1,2-diacyl-sn-glycero-3-phospho-L-serine + H2O = a 2-acyl-sn-glycero-3-phospho-L-serine + a fatty acid + H(+). The enzyme catalyses a 1-acylglycerol + H2O = glycerol + a fatty acid + H(+). The catalysed reaction is 1-(9Z-octadecenoyl)-glycerol + H2O = glycerol + (9Z)-octadecenoate + H(+). Hydrolyzes the sn-1 position of glycerophospholipids with high specificity towards phosphatidylserine (PS), PS-PLA1 enzyme. Also hydrolyzes the acyl chain of glycerolipids with a preference for the monoacylglycerol (MAG) 1-acylglycerol, MAG lipase. Plays a regulatory role in cellular lipid homeostasis by modulating genes involved in neutral lipid degradation and in phospholipid synthesis and composition. This chain is ABHD16B, found in Rattus norvegicus (Rat).